The chain runs to 231 residues: Large ribosomal subunit protein uL1 (231 aa).

Belongs to the universal ribosomal protein uL1 family. As to quaternary structure, part of the 50S ribosomal subunit.

Its function is as follows. Binds directly to 23S rRNA. The L1 stalk is quite mobile in the ribosome, and is involved in E site tRNA release. Protein L1 is also a translational repressor protein, it controls the translation of the L11 operon by binding to its mRNA. The sequence is that of Large ribosomal subunit protein uL1 from Agrobacterium fabrum (strain C58 / ATCC 33970) (Agrobacterium tumefaciens (strain C58)).